The following is a 1017-amino-acid chain: Probable beta-galactosidase B (1017 aa).

A signal peptide spans 1-20; sequence MTRITKLCVLLLSSIGLLAA. The N-linked (GlcNAc...) asparagine glycan is linked to Asn23. Position 90 (Tyr90) interacts with substrate. An N-linked (GlcNAc...) asparagine glycan is attached at Asn100. Substrate-binding residues include Asn135, Ala136, and Glu137. N-linked (GlcNAc...) asparagine glycosylation is present at Asn158. Asn195 contacts substrate. Catalysis depends on Glu196, which acts as the Proton donor. N-linked (GlcNAc...) asparagine glycosylation is present at Asn211. A substrate-binding site is contributed by Tyr265. Cys271 and Cys324 are disulfide-bonded. The active-site Nucleophile is the Glu308. A substrate-binding site is contributed by Tyr373. N-linked (GlcNAc...) asparagine glycans are attached at residues Asn411, Asn417, Asn456, Asn628, Asn681, Asn737, Asn770, Asn777, Asn785, Asn828, and Asn829.

Belongs to the glycosyl hydrolase 35 family.

It is found in the secreted. The enzyme catalyses Hydrolysis of terminal non-reducing beta-D-galactose residues in beta-D-galactosides.. Cleaves beta-linked terminal galactosyl residues from gangliosides, glycoproteins, and glycosaminoglycans. In Aspergillus niger (strain ATCC MYA-4892 / CBS 513.88 / FGSC A1513), this protein is Probable beta-galactosidase B (lacB).